We begin with the raw amino-acid sequence, 516 residues long: Alstonine synthase (516 aa).

Residues 6–26 (NFSLTSPIFLLLSSLFLIILL) traverse the membrane as a helical segment. Cysteine 453 contributes to the heme binding site.

This sequence belongs to the cytochrome P450 family. It depends on heme as a cofactor. Highly expressed in stems. Expressed at low levels in roots.

Its subcellular location is the endoplasmic reticulum membrane. The catalysed reaction is tetrahydroalstonine + A + reduced [NADPH--hemoprotein reductase] + O2 = alstonine + AH2 + oxidized [NADPH--hemoprotein reductase] + 2 H2O + H(+). The enzyme catalyses ajmalicine + A + reduced [NADPH--hemoprotein reductase] + O2 = serpentine + AH2 + oxidized [NADPH--hemoprotein reductase] + 2 H2O + H(+). It participates in alkaloid biosynthesis. In terms of biological role, involved in monoterpene indole alkaloids (MIAs) biosynthesis. Converts by aromatization the tetrahydro-beta-carboline alkaloids tetrahydroalstonine and ajmalicine to the corresponding beta-carboline alkaloids alstonine and serpentine, respectively. This chain is Alstonine synthase, found in Catharanthus roseus (Madagascar periwinkle).